The primary structure comprises 158 residues: Transcription elongation factor GreA (158 aa).

Residues 46–66 (AEYEAAKERQGFIEGRISELE) are a coiled coil.

The protein belongs to the GreA/GreB family.

In terms of biological role, necessary for efficient RNA polymerase transcription elongation past template-encoded arresting sites. The arresting sites in DNA have the property of trapping a certain fraction of elongating RNA polymerases that pass through, resulting in locked ternary complexes. Cleavage of the nascent transcript by cleavage factors such as GreA or GreB allows the resumption of elongation from the new 3'terminus. GreA releases sequences of 2 to 3 nucleotides. This Neisseria meningitidis serogroup A / serotype 4A (strain DSM 15465 / Z2491) protein is Transcription elongation factor GreA.